A 124-amino-acid polypeptide reads, in one-letter code: Ribonuclease VapC32 (124 aa).

A PINc domain is found at 2 to 112; the sequence is ILVDTSVWIE…TRDKRLKAAC (111 aa). Residues Asp5 and Asp86 each coordinate Mg(2+).

Belongs to the PINc/VapC protein family. Mg(2+) is required as a cofactor.

In terms of biological role, toxic component of a type II toxin-antitoxin (TA) system. An RNase. Its toxic effect is neutralized by coexpression with cognate antitoxin VapB32. The protein is Ribonuclease VapC32 of Mycobacterium tuberculosis (strain CDC 1551 / Oshkosh).